The chain runs to 142 residues: Large ribosomal subunit protein uL13 (142 aa).

The protein belongs to the universal ribosomal protein uL13 family. As to quaternary structure, part of the 50S ribosomal subunit.

Functionally, this protein is one of the early assembly proteins of the 50S ribosomal subunit, although it is not seen to bind rRNA by itself. It is important during the early stages of 50S assembly. The sequence is that of Large ribosomal subunit protein uL13 from Herminiimonas arsenicoxydans.